Consider the following 269-residue polypeptide: Probable cytochrome c oxidase subunit 2 (269 aa).

Helical transmembrane passes span 8–28, 50–70, and 87–107; these read ITLI…PLPW, LLYI…FVCI, and ILIE…IAVP. Positions 189, 224, 228, and 232 each coordinate Cu cation.

It belongs to the cytochrome c oxidase subunit 2 family. Cu cation is required as a cofactor. Requires heme as cofactor.

Its subcellular location is the cell membrane. The catalysed reaction is 4 Fe(II)-[cytochrome c] + O2 + 8 H(+)(in) = 4 Fe(III)-[cytochrome c] + 2 H2O + 4 H(+)(out). Subunits I and II form the functional core of the enzyme complex. Electrons originating in cytochrome c are transferred via heme a and Cu(A) to the binuclear center formed by heme a3 and Cu(B). This chain is Probable cytochrome c oxidase subunit 2 (ctaC), found in Rickettsia bellii (strain RML369-C).